The following is a 178-amino-acid chain: Small ribosomal subunit protein uS4 (178 aa).

The S4 RNA-binding domain maps to 104–166 (RRLQTLVYRK…PNSPMALENH (63 aa)).

The protein belongs to the universal ribosomal protein uS4 family. Part of the 30S ribosomal subunit. Contacts protein S5. The interaction surface between S4 and S5 is involved in control of translational fidelity.

One of the primary rRNA binding proteins, it binds directly to 16S rRNA where it nucleates assembly of the body of the 30S subunit. In terms of biological role, with S5 and S12 plays an important role in translational accuracy. The protein is Small ribosomal subunit protein uS4 of Methanococcus vannielii (strain ATCC 35089 / DSM 1224 / JCM 13029 / OCM 148 / SB).